Here is a 205-residue protein sequence, read N- to C-terminus: Quinone-oxidoreductase QR2 (205 aa).

The Flavodoxin-like domain occupies 5-192; that stretch reads VYIVYYSTYG…LKQAFHQGMY (188 aa). FMN contacts are provided by residues 11 to 15, 112 to 165, and histidine 136; these read STYGH and IFFS…SPYG. Tyrosine 13 serves as a coordination point for NAD(+).

The protein belongs to the WrbA family. FMN serves as cofactor.

It catalyses the reaction a quinone + NADH + H(+) = a quinol + NAD(+). The catalysed reaction is a quinone + NADPH + H(+) = a quinol + NADP(+). With respect to regulation, inhibited by dicumarol. NAD(P)H:quinone oxidoreductase reducing quinones by a two-electron transfer mechanism. Can use either NADPH or NADH as electron donor. Can use menadione, 5-hydroxy-1,4-naphthoquinone (juglone) and 2,6-dimethoxy-p-benzoquinone (DMBQ) as substrates. Mitigates the toxicity of exogenous quinones in the rhizosphere. In Triphysaria versicolor (Yellow owl's clover), this protein is Quinone-oxidoreductase QR2.